The sequence spans 382 residues: Glutamyl-tRNA reductase (382 aa).

Residues 38-41 (TCNR), Ser85, 90-92 (ENQ), and Gln96 contribute to the substrate site. The active-site Nucleophile is the Cys39. Residue 164–169 (GAGEMG) participates in NADP(+) binding.

It belongs to the glutamyl-tRNA reductase family. Homodimer.

The enzyme catalyses (S)-4-amino-5-oxopentanoate + tRNA(Glu) + NADP(+) = L-glutamyl-tRNA(Glu) + NADPH + H(+). Its pathway is porphyrin-containing compound metabolism; protoporphyrin-IX biosynthesis; 5-aminolevulinate from L-glutamyl-tRNA(Glu): step 1/2. Catalyzes the NADPH-dependent reduction of glutamyl-tRNA(Glu) to glutamate 1-semialdehyde (GSA). The polypeptide is Glutamyl-tRNA reductase (Methanococcus maripaludis (strain C5 / ATCC BAA-1333)).